Here is a 212-residue protein sequence, read N- to C-terminus: MRGYFVSFEGPDGAGKSTVLKEVLDQIGPKLKPQYLVTREPGGSKIAEKIRDIILDPANDKMDAKTEALLYAAARSQHVEEIIRPALSEGKIVFSDRFVDSSLAYQGEGRDLGIEEVKQINDFATGKLDPDLTFFLDIAPEIGLSRIQKLRPGQEDRLEQENIAFHKKVYNGFLKVKDLYPDRFVTIDATQPIEDVVNQVIATLEKRLPEIF.

10–17 (GPDGAGKS) contributes to the ATP binding site.

It belongs to the thymidylate kinase family.

The catalysed reaction is dTMP + ATP = dTDP + ADP. Its function is as follows. Phosphorylation of dTMP to form dTDP in both de novo and salvage pathways of dTTP synthesis. This is Thymidylate kinase from Lactobacillus helveticus (strain DPC 4571).